The following is a 230-amino-acid chain: uncharacterized protein (230 aa).

Helical transmembrane passes span A4–L24, L30–F50, L67–V87, V91–F111, M148–L168, and M210–I230.

The protein belongs to the YohK (E.coli)/YwbG (IPA-22R) (B.subtilis) family.

The protein resides in the cell membrane. This is an uncharacterized protein from Bacillus subtilis (strain 168).